A 177-amino-acid chain; its full sequence is Thymidine kinase (177 aa).

11-18 (GPMFSGKS) is a binding site for ATP. Glu83 acts as the Proton acceptor in catalysis. Phe113 is a substrate binding site. Residues Cys138 and Cys141 each coordinate Zn(2+). 157–161 (IEIIG) is a binding site for substrate. Zn(2+)-binding residues include Cys170 and Cys173.

Belongs to the thymidine kinase family. Homotetramer. Two molecules of substrate bind to each enzyme tetramer.

It carries out the reaction thymidine + ATP = dTMP + ADP + H(+). Functionally, phosphorylates thymidine and thymidine analogs, such as azidothymidine (AZT). Part of the salvage pathway for pyrimidine deoxyribonucleotide synthesis. The protein is Thymidine kinase (OPG101) of Procyon lotor (Raccoon).